The primary structure comprises 364 residues: Protein L-Myc (364 aa).

Disordered regions lie at residues 41 to 81 (TSPP…HSKG), 111 to 172 (DRLA…EIDV), and 219 to 285 (PPES…KRKN). Residues 228–245 (ASERGPQEEVLERDAAGE) are compositionally biased toward basic and acidic residues. A bHLH domain is found at 281–333 (TKRKNHNFLERKRRNDLRSRFLALRDQVPTLASCSKAPKVVILSKALEYLQAL). Residues 333–361 (LVGAEKRMATEKRQLRCRQQQLQKRIAYL) are leucine-zipper.

As to quaternary structure, efficient DNA binding requires dimerization with another bHLH protein. Binds DNA as a heterodimer with MAX.

The protein localises to the nucleus. The chain is Protein L-Myc (MYCL) from Homo sapiens (Human).